Consider the following 162-residue polypeptide: Novel acetylcholine receptor chaperone (162 aa).

The Cytoplasmic segment spans residues 1-5; it reads MASPR. A helical transmembrane segment spans residues 6 to 26; that stretch reads TVTIVALSVTLGLFFVFMGTI. The Lumenal portion of the chain corresponds to 27–61; the sequence is KLTPRLSKDAYSEMKRAYKSYVKALPALKKIGISS. The chain crosses the membrane as a helical span at residues 62–82; it reads VFLRKAIGSLELACGIVLTLV. The Cytoplasmic portion of the chain corresponds to 83–88; the sequence is PGRPKD. Residues 89 to 109 traverse the membrane as a helical segment; that stretch reads VANFILLLLVLIVLFFHQLVG. Residues 110-114 lie on the Lumenal side of the membrane; it reads DPLKR. Residues 115–131 traverse the membrane as a helical segment; that stretch reads YAHALVFGILLTCRLLV. Topologically, residues 132–162 are cytoplasmic; sequence SRQPEEEFPEKKLSRGNNGAHSREPIKMKVS. Positions 141-162 are disordered; the sequence is EKKLSRGNNGAHSREPIKMKVS. Basic and acidic residues predominate over residues 152-162; the sequence is HSREPIKMKVS.

Belongs to the DoxX family.

The protein resides in the peroxisome membrane. The protein localises to the cytoplasmic vesicle. It is found in the endoplasmic reticulum membrane. Functionally, molecular chaperone which mediates the proper assembly and functional expression of the nicotinic acetylcholine receptors (nAChRs) throughout the brain. Essential for the proper folding, assembly, function and surface trafficking of alpha-7 (CHRNA7), alpha-4-beta-2, alpha-3-beta-2 and alpha-3-beta-4 receptors. This Xenopus tropicalis (Western clawed frog) protein is Novel acetylcholine receptor chaperone (tmem35a).